We begin with the raw amino-acid sequence, 1222 residues long: MEAARTERPAGRPGAPLVRTGLLLLSTWVLAGAEITWDATGGPGRPAAPASRPPALSPLSPRAVASQWPEELASARRAAVLGRRAGPELLPQQGGGRGGEMQVEAGGTSPAGERRGRGIPAPAKLGGARRSRRAQPPITQERGDAWATAPADGSRGSRPLAKGSREEVKAPRAGGSAAEDLRLPSTSFALTGDSAHNQAMVHWSGHNSSVILILTKLYDFNLGSVTESSLWRSTDYGTTYEKLNDKVGLKTVLSYLYVNPTNKRKIMLLSDPEMESSILISSDEGATYQKYRLTFYIQSLLFHPKQEDWVLAYSLDQKLYSSMDFGRRWQLMHERITPNRFYWSVAGLDKEADLVHMEVRTTDGYAHYLTCRIQECAETTRSGPFARSIDISSLVVQDEYIFIQVTTSGRASYYVSYRREAFAQIKLPKYSLPKDMHIISTDENQVFAAVQEWNQNDTYNLYISDTRGIYFTLAMENIKSSRGLMGNIIIELYEVAGIKGIFLANKKVDDQVKTYITYNKGRDWRLLQAPDVDLRGSPVHCLLPFCSLHLHLQLSENPYSSGRISSKETAPGLVVATGNIGPELSYTDIGVFISSDGGNTWRQIFDEEYNVWFLDWGGALVAMKHTPLPVRHLWVSFDEGHSWDKYGFTSVPLFVDGALVEAGMETHIMTVFGHFSLRSEWQLVKVDYKSIFSRHCTKEDYQTWHLLNQGEPCVMGERKIFKKRKPGAQCALGRDHSGSVVSEPCVCANWDFECDYGYERHGESQCVPAFWYNPASPSKDCSLGQSYLNSTGYRRIVSNNCTDGLREKYTAKAQMCPGKAPRGLHVVTTDGRLVAEQGHNATFIILMEEGDLQRTNIQLDFGDGIAVSYANFSPIEDGIKHVYKSAGIFQVTAYAENNLGSDTAVLFLHVVCPVEHVHLRVPFVAIRNKEVNISAVVWPSQLGTLTYFWWFGNSTKPLITLDSSISFTFLAEGTDTITVQVAAGNALIQDTKEIAVHEYFQSQLLSFSPNLDYHNPDIPEWRKDIGNVIKRALVKVTSVPEDQILIAVFPGLPTSAELFILPPKNLTERRKGNEGDLEQIVETLFNALNQNLVQFELKPGVQVIVYVTQLTLAPLVDSSAGHSSSAMLMLLSVVFVGLAVFLIYKFKRKIPWINIYAQVQHDKEQEMIGSVSQSENAPKITLSDFTEPEELLDKELDTRVIGGIATIANSESTKEIPNCTSV.

Positions 1–33 (MEAARTERPAGRPGAPLVRTGLLLLSTWVLAGA) are cleaved as a signal peptide. A propeptide spans 34–133 (EITWDATGGP…KLGGARRSRR (100 aa)) (removed in mature form). Disordered stretches follow at residues 40–70 (TGGP…QWPE) and 87–180 (PELL…AAED). The Lumenal segment spans residues 135-1125 (QPPITQERGD…VDSSAGHSSS (991 aa)). N-linked (GlcNAc...) asparagine glycosylation is present at Asn207. 3 BNR repeats span residues 231–242 (WRSTDYGTTYEK), 279–290 (LISSDEGATYQK), and 320–331 (YSSMDFGRRWQL). N-linked (GlcNAc...) asparagine glycosylation is present at Asn456. BNR repeat units follow at residues 515–526 (YITYNKGRDWRL), 592–603 (FISSDGGNTWRQ), and 634–645 (WVSFDEGHSWDK). N-linked (GlcNAc...) asparagine glycans are attached at residues Asn789, Asn800, Asn840, Asn932, Asn953, and Asn1065. The 91-residue stretch at 827 to 917 (VTTDGRLVAE…LHVVCPVEHV (91 aa)) folds into the PKD domain. A helical membrane pass occupies residues 1126 to 1146 (AMLMLLSVVFVGLAVFLIYKF). Residues 1147 to 1222 (KRKIPWINIY…TKEIPNCTSV (76 aa)) are Cytoplasmic-facing. Positions 1219-1222 (CTSV) are interaction with DLG4.

Belongs to the VPS10-related sortilin family. SORCS subfamily. Homodimer. Interacts with NGF. Interacts with DLG4/PSD95 and PICK1. In terms of tissue distribution, highly expressed in brain.

The protein localises to the cell membrane. It localises to the synaptic cell membrane. The protein resides in the postsynaptic density. Its function is as follows. Plays an important role in modulating synaptic transmission and plasticity in the hippocampus, probably by affecting the trafficking and localization ofAMPA-type glutamate receptors in the postsynaptic density. The sequence is that of VPS10 domain-containing receptor SorCS3 (SORCS3) from Homo sapiens (Human).